A 96-amino-acid chain; its full sequence is Acylphosphatase (96 aa).

Residues 11–96 (ARRWYVRGRV…ITSYDSFRIR (86 aa)) enclose the Acylphosphatase-like domain. Active-site residues include R26 and N44.

It belongs to the acylphosphatase family.

It carries out the reaction an acyl phosphate + H2O = a carboxylate + phosphate + H(+). The protein is Acylphosphatase (acyP) of Solibacter usitatus (strain Ellin6076).